Consider the following 458-residue polypeptide: Nuclear transcription factor Y subunit gamma (458 aa).

Over residues 305-315 (QQQFSQFTDGQ) the composition is skewed to low complexity. A disordered region spans residues 305–379 (QQQFSQFTDG…QQSSTSPPPS (75 aa)). Polar residues predominate over residues 339–351 (TGNSTPCTSSLPT).

Belongs to the NFYC/HAP5 subunit family. As to quaternary structure, heterotrimeric transcription factor composed of three components, NF-YA, NF-YB and NF-YC. NF-YB and NF-YC must interact and dimerize for NF-YA association and DNA binding.

Its subcellular location is the nucleus. In terms of biological role, component of the sequence-specific heterotrimeric transcription factor (NF-Y) which specifically recognizes a 5'-CCAAT-3' box motif found in the promoters of its target genes. NF-Y can function as both an activator and a repressor, depending on its interacting cofactors. This Homo sapiens (Human) protein is Nuclear transcription factor Y subunit gamma (NFYC).